The chain runs to 370 residues: Aminomethyltransferase (370 aa).

It belongs to the GcvT family. In terms of assembly, the glycine cleavage system is composed of four proteins: P, T, L and H.

It carries out the reaction N(6)-[(R)-S(8)-aminomethyldihydrolipoyl]-L-lysyl-[protein] + (6S)-5,6,7,8-tetrahydrofolate = N(6)-[(R)-dihydrolipoyl]-L-lysyl-[protein] + (6R)-5,10-methylene-5,6,7,8-tetrahydrofolate + NH4(+). In terms of biological role, the glycine cleavage system catalyzes the degradation of glycine. The sequence is that of Aminomethyltransferase from Leptospira biflexa serovar Patoc (strain Patoc 1 / Ames).